The chain runs to 454 residues: UPF0210 protein BAD_1323 (454 aa).

The protein belongs to the UPF0210 family. As to quaternary structure, homodimer.

This is UPF0210 protein BAD_1323 from Bifidobacterium adolescentis (strain ATCC 15703 / DSM 20083 / NCTC 11814 / E194a).